Consider the following 370-residue polypeptide: Cysteine-type anaerobic sulfatase-maturating enzyme (370 aa).

In terms of domain architecture, Radical SAM core spans M1 to E227. [4Fe-4S] cluster contacts are provided by C15 and C19. Position 21 (Y21) interacts with S-adenosyl-L-methionine. C22 serves as a coordination point for [4Fe-4S] cluster. The S-adenosyl-L-methionine site is built by G66, S122, R134, and L195. Residues C255, C261, and C276 each coordinate [4Fe-4S] cluster. The active-site Proton acceptor is D277. 5 residues coordinate [4Fe-4S] cluster: C317, C320, C326, C330, and C348.

The protein belongs to the radical SAM superfamily. Anaerobic sulfatase-maturating enzyme family. It depends on [4Fe-4S] cluster as a cofactor.

It carries out the reaction L-cysteinyl-[sulfatase] + S-adenosyl-L-methionine + H2O = 3-oxo-L-alanyl-[sulfatase] + hydrogen sulfide + 5'-deoxyadenosine + L-methionine + 2 H(+). The protein operates within protein modification; sulfatase oxidation. Involved in 'Cys-type' sulfatase maturation under anaerobic conditions. Catalyzes the post-translational modification of cysteine into 3-oxoalanine (also known as C(alpha)-formylglycine (FGly)), by a free radical chemical mechanism initiated via the reductive cleavage of S-adenosyl-L-methionine (SAM). In Clostridium perfringens (strain 13 / Type A), this protein is Cysteine-type anaerobic sulfatase-maturating enzyme.